The primary structure comprises 311 residues: Methionyl-tRNA formyltransferase (311 aa).

111–114 contacts (6S)-5,6,7,8-tetrahydrofolate; it reads SLLP.

The protein belongs to the Fmt family.

The catalysed reaction is L-methionyl-tRNA(fMet) + (6R)-10-formyltetrahydrofolate = N-formyl-L-methionyl-tRNA(fMet) + (6S)-5,6,7,8-tetrahydrofolate + H(+). Its function is as follows. Attaches a formyl group to the free amino group of methionyl-tRNA(fMet). The formyl group appears to play a dual role in the initiator identity of N-formylmethionyl-tRNA by promoting its recognition by IF2 and preventing the misappropriation of this tRNA by the elongation apparatus. This chain is Methionyl-tRNA formyltransferase, found in Caldicellulosiruptor saccharolyticus (strain ATCC 43494 / DSM 8903 / Tp8T 6331).